We begin with the raw amino-acid sequence, 420 residues long: MRWRTIQARYCFLLVPCVLTALEAVPIDVDKTKVHNVEPVESARIEPPDTGLYYDEYLKQVIEVLETDPHFREKLQKADIEEIRSGRLSQELDLVSHKVRTRLDELKRQEVGRLRMLIKAKLDALQDTGMNHHLLLKQFEHLNHQNPDTFESKDLDMLIKAATADLEQYDRTRHEEFKKYEMMKEHERREYLKTLSEEKRKEEEAKFAEMKRKHEDHPKVNHPGSKDQLKEVWEETDGLDPNDFDPKTFFKLHDVNNDGFLDEQELEALFTKELDKVYNPQNAEDDMIEMEEERLRMREHVMNEIDNNKDRLVTLEEFLRATEKKEFLEPDSWETLDQQQLFTEEELKEYESIIAIQESELKKKADELQKQKEELQRQHDHLEAQKQEYQQAVQQLEQKKFQQGIAPSGPAGELKFEPHT.

Residues 1–24 form the signal peptide; that stretch reads MRWRTIQARYCFLLVPCVLTALEA. The DNA-binding element occupies 171–223; that stretch reads RTRHEEFKKYEMMKEHERREYLKTLSEEKRKEEEAKFAEMKRKHEDHPKVNHP. The tract at residues 194–225 is disordered; it reads TLSEEKRKEEEAKFAEMKRKHEDHPKVNHPGS. A binds to necdin region spans residues 213-420; sequence KHEDHPKVNH…AGELKFEPHT (208 aa). EF-hand domains are found at residues 241–276 and 293–328; these read PNDFDPKTFFKLHDVNNDGFLDEQELEALFTKELDK and ERLRMREHVMNEIDNNKDRLVTLEEFLRATEKKEFL. Ca(2+) contacts are provided by Asp254, Asn256, Asp258, Glu265, Asp306, Asn308, Asp310, and Glu317. Residues 304 to 334 carry the GBA motif; sequence EIDNNKDRLVTLEEFLRATEKKEFLEPDSWE. A Phosphoserine modification is found at Ser332. Positions 366–386 are enriched in basic and acidic residues; that stretch reads DELQKQKEELQRQHDHLEAQK. The interval 366–420 is disordered; it reads DELQKQKEELQRQHDHLEAQKQEYQQAVQQLEQKKFQQGIAPSGPAGELKFEPHT. A compositionally biased stretch (low complexity) spans 387-396; it reads QEYQQAVQQL.

Belongs to the nucleobindin family. Interacts (via GBA motif) with guanine nucleotide-binding protein G(i) alpha subunit GNAI3. Preferentially interacts with inactive rather than active GNAI3. Interaction with GNAI3 is inhibited when NUCB2 binds calcium, probably due to a conformational change which renders the GBA motif inaccessible. Binds to the postmitotic growth suppressor NDN; coexpression abolishes NUCB2 secretion. Interacts with MC4R.

It is found in the golgi apparatus. The protein resides in the endoplasmic reticulum. It localises to the nucleus envelope. Its subcellular location is the membrane. The protein localises to the cytoplasm. It is found in the secreted. In terms of biological role, calcium-binding protein which may have a role in calcium homeostasis. Acts as a non-receptor guanine nucleotide exchange factor which binds to and activates guanine nucleotide-binding protein (G-protein) alpha subunit GNAI3. Functionally, anorexigenic peptide, seems to play an important role in hypothalamic pathways regulating food intake and energy homeostasis, acting in a leptin-independent manner. May also exert hypertensive roles and modulate blood pressure through directly acting on peripheral arterial resistance. In intestinal epithelial cells, plays a role in the inhibition of hepatic glucose production via MC4R receptor leading to increased cyclic adenosine monophosphate (cAMP) levels and glucagon-like peptide 1 (GLP-1) secretion. This chain is Nucleobindin-2 (Nucb2), found in Rattus norvegicus (Rat).